We begin with the raw amino-acid sequence, 160 residues long: Endoribonuclease YbeY (160 aa).

Zn(2+) contacts are provided by His-123, His-127, and His-133.

The protein belongs to the endoribonuclease YbeY family. Zn(2+) is required as a cofactor.

It localises to the cytoplasm. In terms of biological role, single strand-specific metallo-endoribonuclease involved in late-stage 70S ribosome quality control and in maturation of the 3' terminus of the 16S rRNA. The chain is Endoribonuclease YbeY from Shouchella clausii (strain KSM-K16) (Alkalihalobacillus clausii).